The following is a 726-amino-acid chain: ATP-dependent permease MDL1, mitochondrial (726 aa).

Residues 1 to 112 (MDPIRFGLSR…LAFLKLCVRH (112 aa)) constitute a mitochondrion transit peptide. Residues N66, N113, and N132 are each glycosylated (N-linked (GlcNAc...) asparagine). The next 5 helical transmembrane spans lie at 158–178 (FFIA…IPYI), 196–216 (IMGI…FLGS), 306–326 (GYMS…GEYV), 386–406 (GIFF…ILAL), and 423–443 (SFLL…GCFT). The region spanning 158–447 (FFIAGSLLLV…LSGCFTDIMK (290 aa)) is the ABC transmembrane type-1 domain. An ABC transporter domain is found at 482-719 (LSFRNVGFAY…GTNFYKLMRW (238 aa)). N-linked (GlcNAc...) asparagine glycosylation occurs at N502. 517-524 (APSGGGKS) contributes to the ATP binding site. N584, N598, and N668 each carry an N-linked (GlcNAc...) asparagine glycan.

It belongs to the ABC transporter superfamily. ABCB family. Mitochondrial peptide exporter (TC 3.A.1.212) subfamily.

Its subcellular location is the mitochondrion inner membrane. Mediates export of peptides generated upon proteolysis of mitochondrial inner membrane proteins. The sequence is that of ATP-dependent permease MDL1, mitochondrial (mdl1) from Schizosaccharomyces pombe (strain 972 / ATCC 24843) (Fission yeast).